Here is a 156-residue protein sequence, read N- to C-terminus: Glycine cleavage system H protein 2, mitochondrial (156 aa).

A mitochondrion-targeting transit peptide spans 1 to 23 (MACRLFWASRVASHLRISVAQRG). In terms of domain architecture, Lipoyl-binding spans 47–129 (KATFGITDHA…YEQGWIIKVE (83 aa)). Residue K88 is modified to N6-lipoyllysine. Residue S131 is modified to Phosphoserine.

The protein belongs to the GcvH family. As to quaternary structure, the glycine cleavage system is composed of four proteins: P, T, L and H. Requires (R)-lipoate as cofactor.

The protein localises to the mitochondrion. The glycine decarboxylase (GDC) or glycine cleavage system catalyzes the degradation of glycine. The H protein shuttles the methylamine group of glycine from the P protein to the T protein. In Arabidopsis thaliana (Mouse-ear cress), this protein is Glycine cleavage system H protein 2, mitochondrial (GDH2).